A 182-amino-acid chain; its full sequence is Phospholipase A2 inhibitor gamma subunit A2 (182 aa).

Disulfide bonds link Cys-3-Cys-27, Cys-6-Cys-13, Cys-20-Cys-48, Cys-54-Cys-75, Cys-76-Cys-81, Cys-99-Cys-124, Cys-117-Cys-146, and Cys-150-Cys-172. Asn-157 is a glycosylation site (N-linked (GlcNAc...) asparagine).

This sequence belongs to the CNF-like-inhibitor family. As to quaternary structure, heterodimer of subunit A and subunit B.

Its subcellular location is the secreted. Its function is as follows. Phospholipase A2 (PA2) inhibitor. Inhibits the enzymatic activity of PA2 of Deinagkistrodon acutus. Also shows a wide anti-hemorrhage activities to D.acutus, Naja atra and Agkistrodon halys venom. The native protein is more potent than the recombinant one. In Trimerodytes annularis (Red-bellied annulate keelback), this protein is Phospholipase A2 inhibitor gamma subunit A2.